Here is a 63-residue protein sequence, read N- to C-terminus: Large ribosomal subunit protein uL30 (63 aa).

It belongs to the universal ribosomal protein uL30 family. As to quaternary structure, part of the 50S ribosomal subunit.

This Xanthomonas axonopodis pv. citri (strain 306) protein is Large ribosomal subunit protein uL30.